The following is a 328-amino-acid chain: Eukaryotic translation initiation factor 3 subunit I (328 aa).

5 WD repeats span residues 8–47 (GHER…RLGT), 50–91 (GHQG…GTIP), 148–187 (SIQT…ELNS), 190–229 (DHTG…CLKT), and 287–328 (GHFG…FVFE).

This sequence belongs to the eIF-3 subunit I family. As to quaternary structure, component of the eukaryotic translation initiation factor 3 (eIF-3) complex.

It is found in the cytoplasm. In terms of biological role, component of the eukaryotic translation initiation factor 3 (eIF-3) complex, which is involved in protein synthesis of a specialized repertoire of mRNAs and, together with other initiation factors, stimulates binding of mRNA and methionyl-tRNAi to the 40S ribosome. The eIF-3 complex specifically targets and initiates translation of a subset of mRNAs involved in cell proliferation. The sequence is that of Eukaryotic translation initiation factor 3 subunit I from Culex quinquefasciatus (Southern house mosquito).